The primary structure comprises 227 residues: Enolase-phosphatase E1 (227 aa).

It belongs to the HAD-like hydrolase superfamily. MasA/MtnC family. Monomer. The cofactor is Mg(2+).

The enzyme catalyses 5-methylsulfanyl-2,3-dioxopentyl phosphate + H2O = 1,2-dihydroxy-5-(methylsulfanyl)pent-1-en-3-one + phosphate. Its pathway is amino-acid biosynthesis; L-methionine biosynthesis via salvage pathway; L-methionine from S-methyl-5-thio-alpha-D-ribose 1-phosphate: step 3/6. The protein operates within amino-acid biosynthesis; L-methionine biosynthesis via salvage pathway; L-methionine from S-methyl-5-thio-alpha-D-ribose 1-phosphate: step 4/6. In terms of biological role, bifunctional enzyme that catalyzes the enolization of 2,3-diketo-5-methylthiopentyl-1-phosphate (DK-MTP-1-P) into the intermediate 2-hydroxy-3-keto-5-methylthiopentenyl-1-phosphate (HK-MTPenyl-1-P), which is then dephosphorylated to form the acireductone 1,2-dihydroxy-3-keto-5-methylthiopentene (DHK-MTPene). The sequence is that of Enolase-phosphatase E1 from Pseudomonas syringae pv. syringae (strain B728a).